The following is a 235-amino-acid chain: Ribonuclease 3 (235 aa).

The 130-residue stretch at 6 to 135 (LISLEKILGF…VIGAVYFDCG (130 aa)) folds into the RNase III domain. Glutamate 48 contributes to the Mg(2+) binding site. Residue aspartate 52 is part of the active site. The Mg(2+) site is built by asparagine 121 and glutamate 124. Glutamate 124 is an active-site residue. The DRBM domain maps to 162-231 (DEKTTLQELL…AKKALELLKN (70 aa)).

Belongs to the ribonuclease III family. In terms of assembly, homodimer. The cofactor is Mg(2+).

It localises to the cytoplasm. The enzyme catalyses Endonucleolytic cleavage to 5'-phosphomonoester.. Functionally, digests double-stranded RNA. Involved in the processing of primary rRNA transcript to yield the immediate precursors to the large and small rRNAs (23S and 16S). Processes some mRNAs, and tRNAs when they are encoded in the rRNA operon. Processes pre-crRNA and tracrRNA of type II CRISPR loci if present in the organism. The polypeptide is Ribonuclease 3 (Carboxydothermus hydrogenoformans (strain ATCC BAA-161 / DSM 6008 / Z-2901)).